The primary structure comprises 124 residues: Putative membrane protein insertion efficiency factor (124 aa).

Belongs to the UPF0161 family.

The protein resides in the cell inner membrane. Functionally, could be involved in insertion of integral membrane proteins into the membrane. This is Putative membrane protein insertion efficiency factor from Psychrobacter cryohalolentis (strain ATCC BAA-1226 / DSM 17306 / VKM B-2378 / K5).